The following is a 192-amino-acid chain: Ion-translocating oxidoreductase complex subunit A (192 aa).

The next 6 helical transmembrane spans lie at 5 to 25 (LLLL…FLGL), 39 to 59 (IGMS…SYLV), 65 to 85 (LPFD…AVVV), 102 to 122 (ALGI…VALL), 134 to 154 (AIYG…FSAM), and 171 to 191 (AIAM…TGLV).

The protein belongs to the NqrDE/RnfAE family. In terms of assembly, the complex is composed of six subunits: RnfA, RnfB, RnfC, RnfD, RnfE and RnfG.

The protein localises to the cell inner membrane. Its function is as follows. Part of a membrane-bound complex that couples electron transfer with translocation of ions across the membrane. The chain is Ion-translocating oxidoreductase complex subunit A from Shewanella sp. (strain ANA-3).